Consider the following 139-residue polypeptide: Large-conductance mechanosensitive channel (139 aa).

The next 3 helical transmembrane spans lie at 10–30, 40–60, and 80–100; these read FAVKGNVVDLAVAVIVGAAFG, VIMPVVGKIFGGLDFSNYYIA, and LAYGNFITIALNFIILAFIIF.

This sequence belongs to the MscL family. In terms of assembly, homopentamer.

The protein resides in the cell inner membrane. Channel that opens in response to stretch forces in the membrane lipid bilayer. May participate in the regulation of osmotic pressure changes within the cell. This Janthinobacterium sp. (strain Marseille) (Minibacterium massiliensis) protein is Large-conductance mechanosensitive channel.